Reading from the N-terminus, the 465-residue chain is Glucose-1-phosphate adenylyltransferase (465 aa).

Residues G164, 181 to 182 (EK), and S199 each bind alpha-D-glucose 1-phosphate.

Belongs to the bacterial/plant glucose-1-phosphate adenylyltransferase family. Homotetramer.

The catalysed reaction is alpha-D-glucose 1-phosphate + ATP + H(+) = ADP-alpha-D-glucose + diphosphate. The protein operates within glycan biosynthesis; glycogen biosynthesis. In terms of biological role, involved in the biosynthesis of ADP-glucose, a building block required for the elongation reactions to produce glycogen. Catalyzes the reaction between ATP and alpha-D-glucose 1-phosphate (G1P) to produce pyrophosphate and ADP-Glc. In Arthrobacter sp. (strain FB24), this protein is Glucose-1-phosphate adenylyltransferase.